The chain runs to 74 residues: Transcription attenuation protein MtrB (74 aa).

The protein belongs to the MtrB family. In terms of assembly, oligomer of 11 identical subunits arranged in doughnut-like structure.

Its function is as follows. Required for transcription attenuation control in the Trp operon. This trans-acting factor seems to recognize a 10 bases nucleotide sequence in the Trp leader transcript causing transcription termination. Binds the leader RNA only in presence of L-tryptophan. In Geobacillus sp. (strain WCH70), this protein is Transcription attenuation protein MtrB.